The sequence spans 708 residues: DNA ligase 2 (708 aa).

Residues 71-75, 121-122, and Glu-153 contribute to the NAD(+) site; these read DADYD and SL. Catalysis depends on Lys-155, which acts as the N6-AMP-lysine intermediate. Arg-176, Glu-213, Lys-330, and Lys-354 together coordinate NAD(+). Zn(2+) is bound by residues Cys-448, Cys-451, Cys-466, and Cys-471. A BRCT domain is found at 627-708; that stretch reads ADAGTLAGKE…LLRLAEAAPE (82 aa).

This sequence belongs to the NAD-dependent DNA ligase family. LigA subfamily. It depends on Mg(2+) as a cofactor. Mn(2+) serves as cofactor.

It carries out the reaction NAD(+) + (deoxyribonucleotide)n-3'-hydroxyl + 5'-phospho-(deoxyribonucleotide)m = (deoxyribonucleotide)n+m + AMP + beta-nicotinamide D-nucleotide.. DNA ligase that catalyzes the formation of phosphodiester linkages between 5'-phosphoryl and 3'-hydroxyl groups in double-stranded DNA using NAD as a coenzyme and as the energy source for the reaction. It is essential for DNA replication and repair of damaged DNA. This is DNA ligase 2 from Opitutus terrae (strain DSM 11246 / JCM 15787 / PB90-1).